A 119-amino-acid polypeptide reads, in one-letter code: Holo-[acyl-carrier-protein] synthase (119 aa).

2 residues coordinate Mg(2+): D6 and E51.

The protein belongs to the P-Pant transferase superfamily. AcpS family. The cofactor is Mg(2+).

It is found in the cytoplasm. The enzyme catalyses apo-[ACP] + CoA = holo-[ACP] + adenosine 3',5'-bisphosphate + H(+). Functionally, transfers the 4'-phosphopantetheine moiety from coenzyme A to a Ser of acyl-carrier-protein. This is Holo-[acyl-carrier-protein] synthase from Sulfurovum sp. (strain NBC37-1).